Reading from the N-terminus, the 882-residue chain is Cadherin-1 (882 aa).

Positions 1-22 are cleaved as a signal peptide; the sequence is MGPWSRSLSALLLLLQVSSWLC. Positions 23–154 are excised as a propeptide; that stretch reads QEPEPCHPGF…SSSGLRRRKR (132 aa). N-linked (GlcNAc...) asparagine glycosylation is present at Asn144. Cadherin domains follow at residues 155–262, 263–375, 376–486, 487–593, and 594–697; these read DWVI…KPEF, TQEV…PPVF, NPTT…APIF, VPPE…DNAP, and IPEP…VCKK. The Extracellular portion of the chain corresponds to 155–709; that stretch reads DWVIPPISCP…PIEAGLQIPA (555 aa). Asp257 provides a ligand contact to Ca(2+). Ser280 carries O-linked (Man...) serine glycosylation. A glycan (O-linked (Man...) threonine) is linked at Thr285. Asp288 contributes to the Ca(2+) binding site. O-linked (Man...) threonine glycosylation is found at Thr358, Thr470, Thr472, and Thr509. Asn558 carries N-linked (GlcNAc...) asparagine glycosylation. O-linked (Man...) threonine glycosylation is found at Thr576, Thr578, and Thr580. A glycan (N-linked (GlcNAc...) asparagine) is linked at Asn637. Residues 710 to 730 traverse the membrane as a helical segment; that stretch reads ILGILGGILALLILILLLLLF. The Cytoplasmic portion of the chain corresponds to 731-882; that stretch reads LRRRAVVKEP…ADMYGGGEDD (152 aa). Residues 747-767 form a disordered region; that stretch reads DTRDNVYYYDEEGGGEEDQDF. A phosphotyrosine; by SRC mark is found at Tyr753, Tyr754, and Tyr755. Over residues 755–767 the composition is skewed to acidic residues; that stretch reads YDEEGGGEEDQDF. The segment at 758-769 is required for binding CTNND1 and PSEN1; that stretch reads EGGGEEDQDFDL. Ser770, Ser793, Ser838, Ser840, and Ser846 each carry phosphoserine. Positions 811–882 are required for binding alpha, beta and gamma catenins; sequence IDENLKAADT…ADMYGGGEDD (72 aa).

As to quaternary structure, homodimer; disulfide-linked. Component of an E-cadherin/ catenin adhesion complex composed of at least E-cadherin/CDH1, beta-catenin/CTNNB1 or gamma-catenin/JUP, and potentially alpha-catenin/CTNNA1; the complex is located to adherens junctions. Found in a complex composed of CDH1, RAP1A and PKP3; PKP3 acts as a scaffold protein within the complex, the complex is required for CDH1 localization to mature desmosome cell junctions. Interacts with the TRPV4 and CTNNB1 complex. Interacts with CTNND1. The stable association of CTNNA1 is controversial as CTNNA1 was shown not to bind to F-actin when assembled in the complex. Alternatively, the CTNNA1-containing complex may be linked to F-actin by other proteins such as LIMA1. Interaction with PSEN1, cleaves CDH1 resulting in the disassociation of cadherin-based adherens junctions (CAJs). Interacts with AJAP1 and DLGAP5. Interacts with TBC1D2. Interacts with LIMA1. Interacts with CAV1. Interacts with PIP5K1C. Interacts with RAB8B. Interacts with DDR1; this stabilizes CDH1 at the cell surface and inhibits its internalization. Interacts with RAPGEF2. Interacts with KLRG1. Forms a ternary complex composed of ADAM10, CADH1 and EPHA4; within the complex, CADH1 is cleaved by ADAM10 which disrupts adherens junctions. Interacts with SPEF1. Interacts with CTNNB1 and PKP2. Interacts with AMOTL2; the interaction may facilitate binding of radial actin fibers to cell junction complexes. Interacts with DSG3; the interaction is required for CDH1 localization to developing adherens junctions. During apoptosis or with calcium influx, cleaved by a membrane-bound metalloproteinase (ADAM10), PS1/gamma-secretase and caspase-3. Processing by the metalloproteinase, induced by calcium influx, causes disruption of cell-cell adhesion and the subsequent release of beta-catenin into the cytoplasm. The residual membrane-tethered cleavage product is rapidly degraded via an intracellular proteolytic pathway. Cleavage by caspase-3 releases the cytoplasmic tail resulting in disintegration of the actin microfilament system. The gamma-secretase-mediated cleavage promotes disassembly of adherens junctions. During development of the cochlear organ of Corti, cleavage by ADAM10 at adherens junctions promotes pillar cell separation. In terms of processing, N-glycosylation at Asn-637 is essential for expression, folding and trafficking. Addition of bisecting N-acetylglucosamine by MGAT3 modulates its cell membrane location. Post-translationally, ubiquitinated by a SCF complex containing SKP2, which requires prior phosphorylation by CK1/CSNK1A1. Ubiquitinated by CBLL1/HAKAI, requires prior phosphorylation at Tyr-754. O-glycosylated. O-manosylated by TMTC1, TMTC2, TMTC3 or TMTC4. Thr-285 and Thr-509 are O-mannosylated by TMTC2 or TMTC4 but not TMTC1 or TMTC3.

It is found in the cell junction. The protein resides in the adherens junction. Its subcellular location is the cell membrane. It localises to the endosome. The protein localises to the golgi apparatus. It is found in the trans-Golgi network. The protein resides in the cytoplasm. Its subcellular location is the desmosome. Its function is as follows. Cadherins are calcium-dependent cell adhesion proteins. They preferentially interact with themselves in a homophilic manner in connecting cells; cadherins may thus contribute to the sorting of heterogeneous cell types. CDH1 is involved in mechanisms regulating cell-cell adhesions, mobility and proliferation of epithelial cells. Promotes organization of radial actin fiber structure and cellular response to contractile forces, via its interaction with AMOTL2 which facilitates anchoring of radial actin fibers to CDH1 junction complexes at the cell membrane. Plays a role in the early stages of desmosome cell-cell junction formation via facilitating the recruitment of DSG2 and DSP to desmosome plaques. Has a potent invasive suppressor role. It is a ligand for integrin alpha-E/beta-7. In terms of biological role, E-Cad/CTF2 promotes non-amyloidogenic degradation of Abeta precursors. Has a strong inhibitory effect on APP C99 and C83 production. The chain is Cadherin-1 (CDH1) from Pongo abelii (Sumatran orangutan).